The sequence spans 448 residues: Signal recognition particle 54 kDa protein (448 aa).

GTP is bound by residues 107–114, 189–193, and 247–250; these read GIQGSGKT, DSAGR, and TKLD.

Belongs to the GTP-binding SRP family. SRP54 subfamily. Part of the signal recognition particle protein translocation system, which is composed of SRP and FtsY. Archaeal SRP consists of a 7S RNA molecule of 300 nucleotides and two protein subunits: SRP54 and SRP19.

The protein resides in the cytoplasm. The catalysed reaction is GTP + H2O = GDP + phosphate + H(+). Involved in targeting and insertion of nascent membrane proteins into the cytoplasmic membrane. Binds to the hydrophobic signal sequence of the ribosome-nascent chain (RNC) as it emerges from the ribosomes. The SRP-RNC complex is then targeted to the cytoplasmic membrane where it interacts with the SRP receptor FtsY. This chain is Signal recognition particle 54 kDa protein, found in Thermococcus onnurineus (strain NA1).